The primary structure comprises 184 residues: Peptide deformylase (184 aa).

The Fe cation site is built by C111 and H154. Residue E155 is part of the active site. Residue H158 participates in Fe cation binding.

This sequence belongs to the polypeptide deformylase family. Fe(2+) is required as a cofactor.

The catalysed reaction is N-terminal N-formyl-L-methionyl-[peptide] + H2O = N-terminal L-methionyl-[peptide] + formate. Its function is as follows. Removes the formyl group from the N-terminal Met of newly synthesized proteins. Requires at least a dipeptide for an efficient rate of reaction. N-terminal L-methionine is a prerequisite for activity but the enzyme has broad specificity at other positions. The chain is Peptide deformylase from Lactobacillus helveticus (strain DPC 4571).